The sequence spans 294 residues: 33 kDa chaperonin (294 aa).

Cystine bridges form between Cys-239–Cys-241 and Cys-272–Cys-275.

Belongs to the HSP33 family. Under oxidizing conditions two disulfide bonds are formed involving the reactive cysteines. Under reducing conditions zinc is bound to the reactive cysteines and the protein is inactive.

The protein resides in the cytoplasm. Its function is as follows. Redox regulated molecular chaperone. Protects both thermally unfolding and oxidatively damaged proteins from irreversible aggregation. Plays an important role in the bacterial defense system toward oxidative stress. This is 33 kDa chaperonin from Listeria innocua serovar 6a (strain ATCC BAA-680 / CLIP 11262).